Here is a 77-residue protein sequence, read N- to C-terminus: uncharacterized protein (77 aa).

Helical transmembrane passes span 22–42 and 44–64; these read VFAN…LPVG and LIGL…FFLG.

It is found in the cell membrane. This is an uncharacterized protein from Methanocaldococcus jannaschii (strain ATCC 43067 / DSM 2661 / JAL-1 / JCM 10045 / NBRC 100440) (Methanococcus jannaschii).